Here is a 957-residue protein sequence, read N- to C-terminus: Glycine dehydrogenase (decarboxylating) (957 aa).

At Lys702 the chain carries N6-(pyridoxal phosphate)lysine.

The protein belongs to the GcvP family. As to quaternary structure, the glycine cleavage system is composed of four proteins: P, T, L and H. It depends on pyridoxal 5'-phosphate as a cofactor.

The catalysed reaction is N(6)-[(R)-lipoyl]-L-lysyl-[glycine-cleavage complex H protein] + glycine + H(+) = N(6)-[(R)-S(8)-aminomethyldihydrolipoyl]-L-lysyl-[glycine-cleavage complex H protein] + CO2. The glycine cleavage system catalyzes the degradation of glycine. The P protein binds the alpha-amino group of glycine through its pyridoxal phosphate cofactor; CO(2) is released and the remaining methylamine moiety is then transferred to the lipoamide cofactor of the H protein. This chain is Glycine dehydrogenase (decarboxylating), found in Synechococcus sp. (strain RCC307).